A 526-amino-acid polypeptide reads, in one-letter code: Protein DETOXIFICATION 43 (526 aa).

The Cytoplasmic portion of the chain corresponds to 1 to 36; the sequence is MTETGDDLATVKKPIPFLVIFKDLRHVFSRDTTGRE. A helical membrane pass occupies residues 37 to 57; sequence ILGIAFPAALALAADPIASLI. Residues 58-59 are Extracellular-facing; that stretch reads DT. A helical transmembrane segment spans residues 60–80; sequence AFVGRLGAVQLAAVGVSIAIF. Residues 81-170 are Cytoplasmic-facing; sequence NQASRITIFP…NKKEKRTIRT (90 aa). The tract at residues 133-166 is disordered; the sequence is ISSPTSNDTNQPQQPPAPDTKSNSGNKSNKKEKR. Polar residues predominate over residues 134-144; sequence SSPTSNDTNQP. A helical transmembrane segment spans residues 171 to 191; sequence ASTAMILGLILGLVQAIFLIF. Over 192 to 215 the chain is Extracellular; sequence SSKLLLGVMGVKPNSPMLSPAHKY. The helical transmembrane segment at 216–236 threads the bilayer; that stretch reads LSIRALGAPALLLSLAMQGIF. Residues 237 to 244 lie on the Cytoplasmic side of the membrane; sequence RGFKDTKT. The helical transmembrane segment at 245 to 267 threads the bilayer; sequence PLFATVVADVINIVLDPIFIFVL. Residues 268–270 are Extracellular-facing; it reads RLG. The helical transmembrane segment at 271–293 threads the bilayer; it reads IIGAAIAHVISQYFMTLILFVFL. Residues 294-316 lie on the Cytoplasmic side of the membrane; it reads AKKVNLIPPNFGDLQFGRFLKNG. The helical transmembrane segment at 317 to 337 threads the bilayer; that stretch reads LLLLARTIAVTFCQTLAAAMA. At 338-353 the chain is on the extracellular side; sequence ARLGTTPMAAFQICLQ. A helical membrane pass occupies residues 354–374; it reads VWLTSSLLNDGLAVAGQAILA. At 375-396 the chain is on the cytoplasmic side; that stretch reads CSFAEKDYNKVTAVASRVLQMG. The chain crosses the membrane as a helical span at residues 397–417; it reads FVLGLGLSVFVGLGLYFGAGV. The Extracellular portion of the chain corresponds to 418–426; that stretch reads FSKDPAVIH. A helical transmembrane segment spans residues 427 to 447; that stretch reads LMAIGIPFIAATQPINSLAFV. The Cytoplasmic segment spans residues 448–457; it reads LDGVNFGASD. A helical transmembrane segment spans residues 458–478; that stretch reads FAYTAYSMVGVAAISIAAVIY. Residues 479-484 lie on the Extracellular side of the membrane; the sequence is MAKTNG. The helical transmembrane segment at 485-505 threads the bilayer; sequence FIGIWIALTIYMALRAITGIA. Over 506–526 the chain is Cytoplasmic; that stretch reads RMATGTGPWRFLRGRSSSSSS.

It belongs to the multi antimicrobial extrusion (MATE) (TC 2.A.66.1) family. As to expression, expressed in roots in the pericycle and cells internal to the pericycle and surrounding the vascular tissue. Also expressed in seed and flower.

The protein resides in the cell membrane. Functionally, citrate transporter responsible for loading citrate into xylem tissues, which helps facilitate iron transport to shoots. Mediates the citrate release in the apoplastic spaces during plant development allowing iron nutrition between symplastically disconnected tissues. This Arabidopsis thaliana (Mouse-ear cress) protein is Protein DETOXIFICATION 43.